The primary structure comprises 69 residues: Sec-independent protein translocase protein TatA (69 aa).

A helical transmembrane segment spans residues 1–21 (MFGLGGQELILILMIILLLFG). The tract at residues 49–69 (EFNKAMDDETPKKKDFGPDRE) is disordered.

It belongs to the TatA/E family. As to quaternary structure, forms a complex with TatC.

It is found in the cell inner membrane. Functionally, part of the twin-arginine translocation (Tat) system that transports large folded proteins containing a characteristic twin-arginine motif in their signal peptide across membranes. TatA could form the protein-conducting channel of the Tat system. The sequence is that of Sec-independent protein translocase protein TatA from Chlorobium luteolum (strain DSM 273 / BCRC 81028 / 2530) (Pelodictyon luteolum).